A 98-amino-acid chain; its full sequence is NADH-ubiquinone oxidoreductase chain 4L (98 aa).

The next 3 membrane-spanning stretches (helical) occupy residues 1 to 21, 29 to 49, and 59 to 79; these read MSLV…GLLM, ALLC…ITIL, and TPII…ALLV.

The protein belongs to the complex I subunit 4L family. As to quaternary structure, core subunit of respiratory chain NADH dehydrogenase (Complex I) which is composed of 45 different subunits.

The protein localises to the mitochondrion inner membrane. The catalysed reaction is a ubiquinone + NADH + 5 H(+)(in) = a ubiquinol + NAD(+) + 4 H(+)(out). Functionally, core subunit of the mitochondrial membrane respiratory chain NADH dehydrogenase (Complex I) which catalyzes electron transfer from NADH through the respiratory chain, using ubiquinone as an electron acceptor. Part of the enzyme membrane arm which is embedded in the lipid bilayer and involved in proton translocation. The polypeptide is NADH-ubiquinone oxidoreductase chain 4L (MT-ND4L) (Lipotes vexillifer (Yangtze river dolphin)).